A 545-amino-acid chain; its full sequence is MSTAANEPSRSRGKAPAGERVADWADGRLGIYSLAKANMRKIFPDHWSFMLGEVCLYSFIIIILTGVYLTLFFHPSMAEVEYHGSYVPLQGQMMSEAYASTLDISFDVRGGLLIRQIHHWAALIFLAGMFVHMMRVFFTGAFRKPREVNWLFGFLLLVLGMFTGFTGYSLPDDLLSGTGIRFMEGAILSVPIVGTYISFFLFGGEFPGHDFVSRFYSIHILLLPGIMLGLLVGHLILVFYHKHTQFAGPGKTNKNVVGMPLLPVYTAKAGGFFFLVFGVISVVSAIATINPIWAIGPYRPDQVSTGAQPDWYMGFSEGLIRVMPGWEINAWGHTLVLGVFVPLLIFPLVLAAIAVYPFIESWVTGDKREHHILDRPRNAPTRTAFGVAWLTVYFVLLIGGGNDLWATHFHLSINAITWFVRIAFFVGPVVAFIATKRICLGLQRRDKDKVLHGRESGIIKRLPHGEFIEVHEPLSQEQLHTLTAHEQYQPAEIGPTVDENGVERKVSGTQKLRAKLSESYYGEESQIPKPTVEEYKEITSGHGHH.

Residues 54–74 (VCLYSFIIIILTGVYLTLFFH) form a helical membrane-spanning segment. Heme is bound by residues histidine 118 and histidine 132. 3 consecutive transmembrane segments (helical) span residues 122–142 (ALIF…TGAF), 150–170 (WLFG…GYSL), and 182–202 (FMEG…FFLF). Heme contacts are provided by histidine 219 and histidine 234. The next 5 helical transmembrane spans lie at 220-240 (ILLL…LVFY), 269-289 (AGGF…IATI), 335-355 (LVLG…AIAV), 385-405 (FGVA…NDLW), and 413-433 (INAI…VAFI).

It belongs to the cytochrome b family. In terms of assembly, the cytochrome bc1 complex is composed of a cytochrome b (QcrB), the Rieske iron-sulfur protein (QcrA) and a diheme cytochrome c (QcrC) subunit. Heme serves as cofactor.

It localises to the cell membrane. The enzyme catalyses a quinol + 2 Fe(III)-[cytochrome c](out) = a quinone + 2 Fe(II)-[cytochrome c](out) + 2 H(+)(out). Its function is as follows. Cytochrome b subunit of the cytochrome bc1 complex, an essential component of the respiratory electron transport chain required for ATP synthesis. The bc1 complex catalyzes the oxidation of ubiquinol and the reduction of cytochrome c in the respiratory chain. The bc1 complex operates through a Q-cycle mechanism that couples electron transfer to generation of the proton gradient that drives ATP synthesis. The cytochrome b subunit contains two ubiquinol reactive sites: the oxidation (QP) site and the reduction (QN) site. In Streptomyces coelicolor (strain ATCC BAA-471 / A3(2) / M145), this protein is Cytochrome bc1 complex cytochrome b subunit (qcrB).